We begin with the raw amino-acid sequence, 187 residues long: MLPDKGWLVEARRVPSPHYDCRPDDEKPSLLVVHNISLPPGEFGGPWIDALFTGTIDPDAHPFFAEIAHLRVSAHCLIRRDGEIVQYVPFDKRAWHAGVSNYQGRERCNDFSIGIELEGTDTLAYTDAQYQQLAAVTRTLIASYPAIADNMTGHCNIAPDRKTDPGPAFDWPRFRALVALSSHKEMT.

Residues 29-167 (SLLVVHNISL…APDRKTDPGP (139 aa)) enclose the N-acetylmuramoyl-L-alanine amidase domain. His34 serves as a coordination point for Zn(2+). Residue Glu116 is the Proton acceptor of the active site. His154 and Asp164 together coordinate Zn(2+).

The protein belongs to the N-acetylmuramoyl-L-alanine amidase 2 family. It depends on Zn(2+) as a cofactor.

The protein localises to the cytoplasm. It catalyses the reaction Hydrolyzes the link between N-acetylmuramoyl residues and L-amino acid residues in certain cell-wall glycopeptides.. Involved in cell wall peptidoglycan recycling. Specifically cleaves the amide bond between the lactyl group of N-acetylmuramic acid and the alpha-amino group of the L-alanine in degradation products containing an anhydro N-acetylmuramyl moiety. This is 1,6-anhydro-N-acetylmuramyl-L-alanine amidase AmpD (ampD) from Salmonella typhimurium (strain SL1344).